A 572-amino-acid chain; its full sequence is MALTIPRSQYVATYGPTVGDKVRLGDTDLWATIEQDFLTKGDECKFGGGKSVRDGMAQSSTSTRDNPNVLDFALTNVMIIDAKLGIIKADIGIRDGRIVGIGQAGNPDTMDNVTPNMIIGASTEVHNGAHLIATAGGIDTHIHWICPQQAQHAIENGITTMIGGGSGPADGTHATTCTPGKFNIERMFQACEALPVNIGFFGKGNCSMLEPLKEQVVAGALGLKIHEDWGATPAVIDAALKVADEMDVQVAIHTDTLNESGFLEDTMKAINGRVIHTFHTEGAGGGHAPDIIKAAMYPNVLPASTNPTRPFTVNTIDEHLDMLMVCHHLDKRVPEDVAFADSRIRPETIAAEDILHDMGVFSIMSSDSQAMGRVGEVVTRTWQTADKMKAQRGALGDEGNDNFRIKRYIAKYTINPAIAHGISQYVGSLEVGKLADIVLWKPQFFGVKPEFVMKKGFISFAKMGDPNASIPTPQPVFYRPMFGANAKANTESAVYFVSQASVDANIKAQYGIQKETLAVKGCRDVGKKDLVHNNATPEITVDPERYEVRVDGEHITCEPATKVPLAQRYFLF.

In terms of domain architecture, Urease spans 136 to 572 (GGIDTHIHWI…VPLAQRYFLF (437 aa)). Ni(2+) contacts are provided by histidine 141, histidine 143, and lysine 224. Lysine 224 is subject to N6-carboxylysine. Histidine 226 is a binding site for substrate. Histidine 253 and histidine 279 together coordinate Ni(2+). Histidine 327 serves as the catalytic Proton donor. Aspartate 367 contributes to the Ni(2+) binding site.

This sequence belongs to the metallo-dependent hydrolases superfamily. Urease alpha subunit family. As to quaternary structure, heterotrimer of UreA (gamma), UreB (beta) and UreC (alpha) subunits. Three heterotrimers associate to form the active enzyme. It depends on Ni cation as a cofactor. Post-translationally, carboxylation allows a single lysine to coordinate two nickel ions.

The protein localises to the cytoplasm. It catalyses the reaction urea + 2 H2O + H(+) = hydrogencarbonate + 2 NH4(+). It functions in the pathway nitrogen metabolism; urea degradation; CO(2) and NH(3) from urea (urease route): step 1/1. This Actinobacillus pleuropneumoniae serotype 5b (strain L20) protein is Urease subunit alpha.